The chain runs to 567 residues: MKQSKVFIPTMRDVPSEAEAQSHRLLLKSGLIKQSTSGIYSYLPLATRVLNNITAIVRQEMERIDSVEILMPALQQAELWEESGRWGAYGPELMRLQDRHGRQFALGPTHEELVTSIVRNELKSYKQLPMTLFQIQSKFRDEKRPRFGLLRGREFIMKDAYSFHADEASLDQTYQDMYQAYSRIFERVGINARPVVADSGAIGGSHTHEFMALSAIGEDTIVYSKESDYAANIEKAEVVYEPNHKHTTVQPLEKIETPNVKTAQELADFLGRPVDEIVKTMIFKVDGEYIMVLVRGHHEINDIKLKSYFGTDNIELATQDEIVNLVGANPGSLGPVIDKEIKIYADNFVQDLNNLVVGANEDGYHLINVNVGRDFNVDEYGDFRFILEGEKLSDGSGVAHFAEGIEVGQVFKLGTKYSESMNATFLDNQGKAQSLIMGCYGIGISRTLSAIVEQNHDDNGIVWPKSVTPFDLHLISINPKKDDQRELADALYAEFNTKFDVLYDDRQERAGVKFNDADLIGLPLRIVVGKRASEGIVEVKERLTGDSEEVHIDDLMTVITNKYDNLK.

Belongs to the class-II aminoacyl-tRNA synthetase family. ProS type 1 subfamily. Homodimer.

Its subcellular location is the cytoplasm. The catalysed reaction is tRNA(Pro) + L-proline + ATP = L-prolyl-tRNA(Pro) + AMP + diphosphate. Its function is as follows. Catalyzes the attachment of proline to tRNA(Pro) in a two-step reaction: proline is first activated by ATP to form Pro-AMP and then transferred to the acceptor end of tRNA(Pro). As ProRS can inadvertently accommodate and process non-cognate amino acids such as alanine and cysteine, to avoid such errors it has two additional distinct editing activities against alanine. One activity is designated as 'pretransfer' editing and involves the tRNA(Pro)-independent hydrolysis of activated Ala-AMP. The other activity is designated 'posttransfer' editing and involves deacylation of mischarged Ala-tRNA(Pro). The misacylated Cys-tRNA(Pro) is not edited by ProRS. This is Proline--tRNA ligase from Staphylococcus aureus (strain USA300).